The primary structure comprises 751 residues: Dachshund homolog 1 (751 aa).

Residues 1–178 (MAVPAALIPP…PSPVENTPQN (178 aa)) form a disordered region. Low complexity-rich tracts occupy residues 20-53 (ISTSASSSGTTTSTSSATSSPAPSIGPPASSGPT) and 61-74 (ASSASSSAAATVTS). Gly residues-rich tracts occupy residues 75-97 (PGGGGGGSGGGGGSGGNGGGGGS) and 107-119 (SSGGGVSAGGGGA). Positions 120–156 (SSTPITASTGSSSSSSSSSSSSSSSSSSSSSSSSSSS) are enriched in low complexity. Positions 167 to 178 (STPSPVENTPQN) are enriched in polar residues. Positions 182–268 (KMVDLRGAKV…LISRKDFETL (87 aa)) are DACHbox-N. Residues 182–377 (KMVDLRGAKV…VGSSGGSWDK (196 aa)) are interaction with SIX6 and HDAC3. 4 disordered regions span residues 273 to 295 (TNASSRPGRPPKRTQSVTSPENS), 351 to 393 (SNNQ…APVA), 467 to 525 (SPPS…RIPV), and 537 to 556 (MGLSPNVLPGPKEGDLAGHD). Composition is skewed to polar residues over residues 285 to 294 (RTQSVTSPEN) and 351 to 369 (SNNQHGADSENGDMNSSVG). Serine 484 is modified (phosphoserine). The segment covering 499–517 (SHPSSHRSSSVSSSPARTE) has biased composition (low complexity). A DACHbox-C region spans residues 609-689 (SSIETLLTNI…KAKRKLQEAL (81 aa)). Positions 620–699 (GLLKVAIDNA…EFETKRREQA (80 aa)) are interaction with SIN3A. The stretch at 623-711 (KVAIDNARAQ…TLKQAASADS (89 aa)) forms a coiled coil.

It belongs to the DACH/dachshund family. In terms of assembly, interacts with SIX1, SIX6 and EYA3. Interacts with NCOR1 and HDAC3 through its N-terminus. Interacts with SIN3A through its C-terminus. Interacts with SMAD3 and SMAD4. Expressed at higher levels in adult kidney and lung, and at lower levels in brain and testis. Expressed in embryonal kidneys, eyes, cochleae and limb buds.

Its subcellular location is the nucleus. Functionally, transcription factor that is involved in regulation of organogenesis. Seems to be a regulator of SIX1, SIX6 and probably SIX5. Corepression of precursor cell proliferation in myoblasts by SIX1 is switched to coactivation through recruitment of EYA3 to the SIX1-DACH1 complex. Transcriptional activation also seems to involve association of CREBBP. Seems to act as a corepressor of SIX6 in regulating proliferation by directly repressing cyclin-dependent kinase inhibitors, including the p27Kip1 promoter. Inhibits TGF-beta signaling through interaction with SMAD4 and NCOR1. Binds to chromatin DNA via its DACHbox-N domain. This is Dachshund homolog 1 (Dach1) from Mus musculus (Mouse).